The following is a 117-amino-acid chain: uncharacterized protein (117 aa).

This is an uncharacterized protein from Saccharomyces cerevisiae (strain ATCC 204508 / S288c) (Baker's yeast).